A 130-amino-acid chain; its full sequence is MKKTYLLNSEISEVVARLGHTDLLVIADSGLPIPDGVKRIDIALTKGIPSFKDTLNTVLTELGVEKAYIAKEMIDKNNDLYLYLLELFGEKLIIISHEDLKAMSKNARAIIRTGEYKPYANIILESGVEF.

Catalysis depends on H20, which acts as the Proton donor. Substrate is bound by residues D28, H97, and 119 to 121 (YAN).

The protein belongs to the RbsD / FucU family. RbsD subfamily. In terms of assembly, homodecamer.

It is found in the cytoplasm. The catalysed reaction is beta-D-ribopyranose = beta-D-ribofuranose. Its pathway is carbohydrate metabolism; D-ribose degradation; D-ribose 5-phosphate from beta-D-ribopyranose: step 1/2. Its function is as follows. Catalyzes the interconversion of beta-pyran and beta-furan forms of D-ribose. The sequence is that of D-ribose pyranase from Thermoanaerobacter pseudethanolicus (strain ATCC 33223 / 39E) (Clostridium thermohydrosulfuricum).